We begin with the raw amino-acid sequence, 382 residues long: MAAQRPLTIALVAGETSGDILGAGLIRALKARVPNARFVGVAGPRMQAEGCEAWYEMEELAVMGIVEVLGRLRRLLHIRADLTRRFTELKPDVFVGIDAPDFNITLEGNLKKQGIKTIHYVSPSVWAWRQKRVFKIGRSTHMVLAFLPFEKAFYDKFNVPCRFIGHTMADAMPLDPDKNAARDVLGIPHDAHCLALLPGSRGAEVEMLSADFLKTAQLLRQRYPDLEVVVPLVNAKRREQFEKIKAEVAPDLAVHLLDGMAREAMIASDAALLASGTAALECMLAKCPMVVGYRMKSFTFWLAKRLVKTEYVSLPNLLAGRELVKELLQEECEPQKLAEALLPLLANGKTSHAMHDTFRELHQQIRCNADEQAADAVLELAQ.

The protein belongs to the LpxB family.

The catalysed reaction is 2-N,3-O-bis[(3R)-3-hydroxytetradecanoyl]-alpha-D-glucosaminyl 1-phosphate + UDP-2-N,3-O-bis[(3R)-3-hydroxytetradecanoyl]-alpha-D-glucosamine = lipid A disaccharide (E. coli) + UDP + H(+). It carries out the reaction a lipid X + a UDP-2-N,3-O-bis[(3R)-3-hydroxyacyl]-alpha-D-glucosamine = a lipid A disaccharide + UDP + H(+). It functions in the pathway glycolipid biosynthesis; lipid IV(A) biosynthesis; lipid IV(A) from (3R)-3-hydroxytetradecanoyl-[acyl-carrier-protein] and UDP-N-acetyl-alpha-D-glucosamine: step 5/6. Functionally, condensation of UDP-2,3-diacylglucosamine and 2,3-diacylglucosamine-1-phosphate to form lipid A disaccharide, a precursor of lipid A, a phosphorylated glycolipid that anchors the lipopolysaccharide to the outer membrane of the cell. The sequence is that of Lipid-A-disaccharide synthase from Salmonella paratyphi A (strain AKU_12601).